A 74-amino-acid polypeptide reads, in one-letter code: Cytochrome c oxidase assembly factor 5 (74 aa).

The 39-residue stretch at 27-65 folds into the CHCH domain; it reads QSDCVVQEGKSPRQCLKEGYCNSLKYAFFECKRSVLDNR. The short motif at 30–41 is the Cx10C motif element; sequence CVVQEGKSPRQC. 2 disulfides stabilise this stretch: Cys30–Cys57 and Cys41–Cys47. Position 37 is a phosphoserine (Ser37). The short motif at 47–57 is the Cx9C motif element; the sequence is CNSLKYAFFEC.

It belongs to the PET191 family.

In terms of biological role, involved in an early step of the mitochondrial complex IV assembly process. The polypeptide is Cytochrome c oxidase assembly factor 5 (COA5) (Homo sapiens (Human)).